The primary structure comprises 99 residues: Virion membrane protein OPG135 (99 aa).

A signal peptide spans 1-22 (MSCYTAILKSVGGLALFQVANG). Residues 23–45 (AIDLCRHFFMYFCEQKLRPNSFW) lie on the Intravirion side of the membrane. The chain crosses the membrane as a helical span at residues 46–66 (FVVVRAIASMIMYLVLGIALL). The Virion surface segment spans residues 67-83 (YISEQDDKKNTNNDGSN). Residues 73–89 (DKKNTNNDGSNNDKRNE) are compositionally biased toward basic and acidic residues. Residues 73–99 (DKKNTNNDGSNNDKRNESSINSNSSPK) are disordered. N-linked (GlcNAc...) asparagine; by host glycosylation is present at asparagine 88. Residues 90-99 (SSINSNSSPK) are compositionally biased toward polar residues.

The protein belongs to the oerthopoxvirus OPG135 family.

Its subcellular location is the virion membrane. It localises to the host cytoplasm. In terms of biological role, envelope protein. Required for an early step in virion morphogenesis. The chain is Virion membrane protein OPG135 (OPG135) from Homo sapiens (Human).